The sequence spans 101 residues: Apolipoprotein C-II (101 aa).

Positions 1–22 (MGTRFLLALFLVLLVLGFEVQG) are cleaved as a signal peptide. The segment at 66-74 (TVDEKLRDM) is lipid binding. Residues 78–101 (STAAMSTYAGILTDQVLSMLKGEE) are lipoprotein lipase cofactor.

It belongs to the apolipoprotein C2 family. In terms of processing, proapolipoprotein C-II is synthesized as a sialic acid containing glycoprotein which is subsequently desialylated prior to its proteolytic processing. Post-translationally, proapolipoprotein C-II, the major form found in plasma undergoes proteolytic cleavage of its N-terminal hexapeptide to generate apolipoprotein C-II, which occurs as the minor form in plasma.

The protein localises to the secreted. Its function is as follows. Component of chylomicrons, very low-density lipoproteins (VLDL), low-density lipoproteins (LDL), and high-density lipoproteins (HDL) in plasma. Plays an important role in lipoprotein metabolism as an activator of lipoprotein lipase. Both proapolipoprotein C-II and apolipoprotein C-II can activate lipoprotein lipase. The protein is Apolipoprotein C-II (APOC2) of Aotus nancymaae (Ma's night monkey).